Reading from the N-terminus, the 103-residue chain is MYAVIKTGGKQYRVEEGDVVRIEKIEVATGESVDFDQVLLVANGDDVKVGQPMLDGAKVTAEVLEQGRHKKIKIVKFRRRKHSRKQQGHRQWYTAVKITGIQG.

The protein belongs to the bacterial ribosomal protein bL21 family. As to quaternary structure, part of the 50S ribosomal subunit. Contacts protein L20.

Its function is as follows. This protein binds to 23S rRNA in the presence of protein L20. This chain is Large ribosomal subunit protein bL21, found in Alcanivorax borkumensis (strain ATCC 700651 / DSM 11573 / NCIMB 13689 / SK2).